The following is a 323-amino-acid chain: tRNA dimethylallyltransferase (323 aa).

12-19 (GPTAAGKT) contributes to the ATP binding site. Residue 14–19 (TAAGKT) participates in substrate binding. Interaction with substrate tRNA regions lie at residues 37–40 (DSAL) and 161–165 (QRLSR).

The protein belongs to the IPP transferase family. In terms of assembly, monomer. Mg(2+) serves as cofactor.

It catalyses the reaction adenosine(37) in tRNA + dimethylallyl diphosphate = N(6)-dimethylallyladenosine(37) in tRNA + diphosphate. Its function is as follows. Catalyzes the transfer of a dimethylallyl group onto the adenine at position 37 in tRNAs that read codons beginning with uridine, leading to the formation of N6-(dimethylallyl)adenosine (i(6)A). This is tRNA dimethylallyltransferase from Pseudomonas fluorescens (strain Pf0-1).